The sequence spans 402 residues: Cytochrome b561 and DOMON domain-containing protein At4g17280 (402 aa).

The N-terminal stretch at 1–31 is a signal peptide; that stretch reads MSNHMSIMKFLNQILCLSLILSISMTTLSFA. The DOMON domain maps to 54–171; that stretch reads LDSFLHYTYE…GTINTVWQDG (118 aa). A Cytochrome b561 domain is found at 183-379; the sequence is TSGNNVRSVS…LEAFTWYVVI (197 aa). Helical transmembrane passes span 218–238 and 250–270; these read IHGILNGVSWGIMMPLGAIIA and AWFYIHVFCQASAYIIGVAGW. Heme b is bound by residues His219, His255, and His288. Residues 290–310 traverse the membrane as a helical segment; that stretch reads AIGIALFSLATVQVFAMFLRP. His324 is a heme b binding site. Helical transmembrane passes span 326–346 and 359–379; these read TIGYTIIILGVVNVFKGLGIL and IIVVLAIVATLLEAFTWYVVI.

Heme b serves as cofactor.

Its subcellular location is the membrane. Functionally, may act as a catecholamine-responsive trans-membrane electron transporter. The sequence is that of Cytochrome b561 and DOMON domain-containing protein At4g17280 from Arabidopsis thaliana (Mouse-ear cress).